The sequence spans 173 residues: Large ribosomal subunit protein uL10 (173 aa).

Belongs to the universal ribosomal protein uL10 family. Part of the ribosomal stalk of the 50S ribosomal subunit. The N-terminus interacts with L11 and the large rRNA to form the base of the stalk. The C-terminus forms an elongated spine to which L12 dimers bind in a sequential fashion forming a multimeric L10(L12)X complex.

Forms part of the ribosomal stalk, playing a central role in the interaction of the ribosome with GTP-bound translation factors. This chain is Large ribosomal subunit protein uL10, found in Myxococcus xanthus (strain DK1622).